An 89-amino-acid chain; its full sequence is Small ribosomal subunit protein uS15 (89 aa).

The protein belongs to the universal ribosomal protein uS15 family. In terms of assembly, part of the 30S ribosomal subunit. Forms a bridge to the 50S subunit in the 70S ribosome, contacting the 23S rRNA.

In terms of biological role, one of the primary rRNA binding proteins, it binds directly to 16S rRNA where it helps nucleate assembly of the platform of the 30S subunit by binding and bridging several RNA helices of the 16S rRNA. Functionally, forms an intersubunit bridge (bridge B4) with the 23S rRNA of the 50S subunit in the ribosome. The protein is Small ribosomal subunit protein uS15 of Cyanothece sp. (strain PCC 7425 / ATCC 29141).